The following is a 168-amino-acid chain: Transcription antitermination protein NusB (168 aa).

The protein belongs to the NusB family.

In terms of biological role, involved in transcription antitermination. Required for transcription of ribosomal RNA (rRNA) genes. Binds specifically to the boxA antiterminator sequence of the ribosomal RNA (rrn) operons. The chain is Transcription antitermination protein NusB from Bradyrhizobium sp. (strain ORS 278).